A 271-amino-acid polypeptide reads, in one-letter code: MSVIAPSFDMANILTELSSFLGALSLGCWVVLLIPQLLENYKNQSGESISDLFLIIWLIGDFFNVLGSIYGNVSSTVLVLSFYYIVSDSTLLMQIYYYRWKAARRIASREHEPLLQSRSLEEGLHAPIGKQQIWWDRLSTRQQFGVMGCVVIVSTIVGNLIISSASSDKSDDDLNAWPFTAGCISSVLYFCARIPQIIKNHKAKSTEGLSIIFFVLASVGNTSYAFSILVFPASDYLNYTYANLPWILGAFSTIFLDIYIFYQFIKYRNHY.

Residues 14–80 (LTELSSFLGA…GNVSSTVLVL (67 aa)) enclose the PQ-loop 1 domain. A run of 3 helical transmembrane segments spans residues 17 to 37 (LSSF…IPQL), 49 to 69 (ISDL…LGSI), and 77 to 97 (VLVL…QIYY). Residue serine 119 is modified to Phosphoserine. The next 4 membrane-spanning stretches (helical) occupy residues 144–164 (FGVM…IISS), 178–198 (PFTA…PQII), 211–231 (IIFF…ILVF), and 245–265 (PWIL…YQFI). Residues 185 to 239 (SSVLYFCARIPQIIKNHKAKSTEGLSIIFFVLASVGNTSYAFSILVFPASDYLNY) form the PQ-loop 2 domain.

It belongs to the laat-1 family.

The protein resides in the vacuole membrane. The enzyme catalyses L-histidine(out) + L-arginine(in) = L-histidine(in) + L-arginine(out). In terms of biological role, amino acid transporter that moves basic amino acids across the vacuolar membrane. Appears to function as an arginine/histidine antiporter. This chain is Vacuolar arginine/histidine antiporter stm1 (stm1), found in Schizosaccharomyces pombe (strain 972 / ATCC 24843) (Fission yeast).